The sequence spans 253 residues: Small ribosomal subunit protein uS2 (253 aa).

Belongs to the universal ribosomal protein uS2 family.

The chain is Small ribosomal subunit protein uS2 from Cereibacter sphaeroides (strain ATCC 17023 / DSM 158 / JCM 6121 / CCUG 31486 / LMG 2827 / NBRC 12203 / NCIMB 8253 / ATH 2.4.1.) (Rhodobacter sphaeroides).